We begin with the raw amino-acid sequence, 83 residues long: Cell division topological specificity factor (83 aa).

The protein belongs to the MinE family.

Prevents the cell division inhibition by proteins MinC and MinD at internal division sites while permitting inhibition at polar sites. This ensures cell division at the proper site by restricting the formation of a division septum at the midpoint of the long axis of the cell. The sequence is that of Cell division topological specificity factor from Acidithiobacillus ferrooxidans (strain ATCC 23270 / DSM 14882 / CIP 104768 / NCIMB 8455) (Ferrobacillus ferrooxidans (strain ATCC 23270)).